A 194-amino-acid chain; its full sequence is Holliday junction branch migration complex subunit RuvA (194 aa).

The interval 1–61 (MIASLSGLLE…EDSVSLYGFA (61 aa)) is domain I. The segment at 62–136 (SVLECTVFEQ…GKLTSVPLEN (75 aa)) is domain II. A flexible linker region spans residues 136–140 (NRKQE). The interval 141-194 (QAVDRSAEIVQALIGLGWQRQESAAAVESVLEKDQSLTMPEILRNALRYLAKQE) is domain III.

This sequence belongs to the RuvA family. In terms of assembly, homotetramer. Forms an RuvA(8)-RuvB(12)-Holliday junction (HJ) complex. HJ DNA is sandwiched between 2 RuvA tetramers; dsDNA enters through RuvA and exits via RuvB. An RuvB hexamer assembles on each DNA strand where it exits the tetramer. Each RuvB hexamer is contacted by two RuvA subunits (via domain III) on 2 adjacent RuvB subunits; this complex drives branch migration. In the full resolvosome a probable DNA-RuvA(4)-RuvB(12)-RuvC(2) complex forms which resolves the HJ.

It is found in the cytoplasm. Functionally, the RuvA-RuvB-RuvC complex processes Holliday junction (HJ) DNA during genetic recombination and DNA repair, while the RuvA-RuvB complex plays an important role in the rescue of blocked DNA replication forks via replication fork reversal (RFR). RuvA specifically binds to HJ cruciform DNA, conferring on it an open structure. The RuvB hexamer acts as an ATP-dependent pump, pulling dsDNA into and through the RuvAB complex. HJ branch migration allows RuvC to scan DNA until it finds its consensus sequence, where it cleaves and resolves the cruciform DNA. The protein is Holliday junction branch migration complex subunit RuvA of Tropheryma whipplei (strain Twist) (Whipple's bacillus).